A 142-amino-acid polypeptide reads, in one-letter code: Large ribosomal subunit protein bL27m (142 aa).

The segment at 27-48 (TKKSAGSTKNGRTSQPKNLGLK) is disordered. The segment covering 30 to 43 (SAGSTKNGRTSQPK) has biased composition (polar residues).

Belongs to the bacterial ribosomal protein bL27 family.

Its subcellular location is the mitochondrion. The sequence is that of Large ribosomal subunit protein bL27m (mrpl27) from Dictyostelium discoideum (Social amoeba).